Here is a 161-residue protein sequence, read N- to C-terminus: Cyclic pyranopterin monophosphate synthase (161 aa).

Residues 75–77 (MCH) and 115–116 (ME) contribute to the substrate site. The active site involves D130.

This sequence belongs to the MoaC family. Homohexamer; trimer of dimers.

It catalyses the reaction (8S)-3',8-cyclo-7,8-dihydroguanosine 5'-triphosphate = cyclic pyranopterin phosphate + diphosphate. It functions in the pathway cofactor biosynthesis; molybdopterin biosynthesis. Its function is as follows. Catalyzes the conversion of (8S)-3',8-cyclo-7,8-dihydroguanosine 5'-triphosphate to cyclic pyranopterin monophosphate (cPMP). The polypeptide is Cyclic pyranopterin monophosphate synthase (Bacillus cereus (strain G9842)).